Consider the following 237-residue polypeptide: Sugar fermentation stimulation protein homolog (237 aa).

This sequence belongs to the SfsA family.

The protein is Sugar fermentation stimulation protein homolog of Pseudomonas putida (strain ATCC 47054 / DSM 6125 / CFBP 8728 / NCIMB 11950 / KT2440).